Here is a 445-residue protein sequence, read N- to C-terminus: Argininosuccinate lyase (445 aa).

The protein belongs to the lyase 1 family. Argininosuccinate lyase subfamily.

It localises to the cytoplasm. The enzyme catalyses 2-(N(omega)-L-arginino)succinate = fumarate + L-arginine. The protein operates within amino-acid biosynthesis; L-arginine biosynthesis; L-arginine from L-ornithine and carbamoyl phosphate: step 3/3. The protein is Argininosuccinate lyase of Xylella fastidiosa (strain 9a5c).